Here is a 157-residue protein sequence, read N- to C-terminus: DNA gyrase inhibitor (157 aa).

This sequence belongs to the DNA gyrase inhibitor family. As to quaternary structure, interacts with DNA gyrase.

It is found in the cytoplasm. In terms of biological role, inhibits the supercoiling activity of DNA gyrase. Acts by inhibiting DNA gyrase at an early step, prior to (or at the step of) binding of DNA by the gyrase. It protects cells against toxins that target DNA gyrase, by inhibiting activity of these toxins and reducing the formation of lethal double-strand breaks in the cell. The sequence is that of DNA gyrase inhibitor from Enterobacter lignolyticus (strain SCF1).